The primary structure comprises 362 residues: Phosphoserine aminotransferase (362 aa).

Residues serine 9 and arginine 42 each contribute to the L-glutamate site. Pyridoxal 5'-phosphate is bound by residues 76–77 (GR), tryptophan 102, threonine 153, aspartate 174, and glutamine 197. An N6-(pyridoxal phosphate)lysine modification is found at lysine 198. 239 to 240 (NT) lines the pyridoxal 5'-phosphate pocket.

It belongs to the class-V pyridoxal-phosphate-dependent aminotransferase family. SerC subfamily. In terms of assembly, homodimer. It depends on pyridoxal 5'-phosphate as a cofactor.

The protein resides in the cytoplasm. The enzyme catalyses O-phospho-L-serine + 2-oxoglutarate = 3-phosphooxypyruvate + L-glutamate. It carries out the reaction 4-(phosphooxy)-L-threonine + 2-oxoglutarate = (R)-3-hydroxy-2-oxo-4-phosphooxybutanoate + L-glutamate. The protein operates within amino-acid biosynthesis; L-serine biosynthesis; L-serine from 3-phospho-D-glycerate: step 2/3. Its pathway is cofactor biosynthesis; pyridoxine 5'-phosphate biosynthesis; pyridoxine 5'-phosphate from D-erythrose 4-phosphate: step 3/5. Functionally, catalyzes the reversible conversion of 3-phosphohydroxypyruvate to phosphoserine and of 3-hydroxy-2-oxo-4-phosphonooxybutanoate to phosphohydroxythreonine. The protein is Phosphoserine aminotransferase of Klebsiella pneumoniae (strain 342).